Consider the following 43-residue polypeptide: Potassium channel toxin gamma-KTx 4.1 (43 aa).

4 cysteine pairs are disulfide-bonded: Cys5-Cys23, Cys11-Cys34, Cys20-Cys39, and Cys24-Cys41.

Belongs to the ergtoxin family. Gamma-KTx 4 subfamily. As to expression, expressed by the venom gland.

Its subcellular location is the secreted. Its function is as follows. Reversibly blocks Kv11/ERG potassium channels. The sequence is that of Potassium channel toxin gamma-KTx 4.1 from Centruroides limpidus (Mexican scorpion).